Here is a 159-residue protein sequence, read N- to C-terminus: HSP70 co-chaperone SNL1 (159 aa).

Residues 1 to 12 (MSHNAMEHWKSK) are Perinuclear space-facing. A helical; Signal-anchor for type II membrane protein membrane pass occupies residues 13–35 (LSKTSTSTYVLLAVIAVVFLVTI). Topologically, residues 36 to 159 (RRPNGSKGKS…AMLKSLDSLK (124 aa)) are cytoplasmic. A disordered region spans residues 39 to 64 (NGSKGKSSKKRASKKNKKGKNQFEKA). The segment covering 44–58 (KSSKKRASKKNKKGK) has biased composition (basic residues). One can recognise a BAG domain in the interval 73 to 159 (QIDNVSLRYG…AMLKSLDSLK (87 aa)).

Interacts with the HSP70 family members SSA1, SSA4, and SSB1. These interactions are strongly reduced by ADP and ATP.

Its subcellular location is the endoplasmic reticulum membrane. The protein resides in the nucleus membrane. In terms of biological role, stimulator of ATPase activity of molecular chaperones of the HSP70 family (principally of the SSA class). Stimulation is important for HSP70-substrate complex dissociation after folding of newly synthesized or refolded proteins. SNL1 is probably involved in nuclear pore biogenesis and in particular the folding or refolding of misfolded NUP116, GLE2 and NIC96. This chain is HSP70 co-chaperone SNL1 (SNL1), found in Saccharomyces cerevisiae (strain ATCC 204508 / S288c) (Baker's yeast).